Reading from the N-terminus, the 468-residue chain is 3-isopropylmalate dehydratase large subunit (468 aa).

Positions 349, 409, and 412 each coordinate [4Fe-4S] cluster.

The protein belongs to the aconitase/IPM isomerase family. LeuC type 1 subfamily. Heterodimer of LeuC and LeuD. [4Fe-4S] cluster serves as cofactor.

It carries out the reaction (2R,3S)-3-isopropylmalate = (2S)-2-isopropylmalate. The protein operates within amino-acid biosynthesis; L-leucine biosynthesis; L-leucine from 3-methyl-2-oxobutanoate: step 2/4. Its function is as follows. Catalyzes the isomerization between 2-isopropylmalate and 3-isopropylmalate, via the formation of 2-isopropylmaleate. This Shewanella baltica (strain OS155 / ATCC BAA-1091) protein is 3-isopropylmalate dehydratase large subunit.